Here is a 206-residue protein sequence, read N- to C-terminus: Carbonic anhydrase (206 aa).

Lysine 11 participates in a covalent cross-link: Isoglutamyl lysine isopeptide (Lys-Gln) (interchain with Q-Cter in protein Pup). 4 residues coordinate Zn(2+): cysteine 51, aspartate 53, histidine 104, and cysteine 107.

It belongs to the beta-class carbonic anhydrase family. In terms of assembly, homotetramer. Requires Zn(2+) as cofactor.

The enzyme catalyses hydrogencarbonate + H(+) = CO2 + H2O. Functionally, catalyzes the reversible hydration of carbon dioxide to form bicarbonate. The sequence is that of Carbonic anhydrase (cynT) from Mycolicibacterium smegmatis (strain ATCC 700084 / mc(2)155) (Mycobacterium smegmatis).